A 674-amino-acid chain; its full sequence is UvrABC system protein C (674 aa).

Residues 64 to 142 enclose the GIY-YIG domain; the sequence is NGPGVYRMLN…IKRLRPRFNV (79 aa). In terms of domain architecture, UVR spans 252-287; that stretch reads QAVKATIASAMAEASENLDFERAALYRDRLAALSHV.

The protein belongs to the UvrC family. As to quaternary structure, interacts with UvrB in an incision complex.

The protein resides in the cytoplasm. Its function is as follows. The UvrABC repair system catalyzes the recognition and processing of DNA lesions. UvrC both incises the 5' and 3' sides of the lesion. The N-terminal half is responsible for the 3' incision and the C-terminal half is responsible for the 5' incision. In Rhizobium meliloti (strain 1021) (Ensifer meliloti), this protein is UvrABC system protein C.